The primary structure comprises 702 residues: Arginine decarboxylase 1 (702 aa).

Lys-151 carries the N6-(pyridoxal phosphate)lysine modification. 336-346 serves as a coordination point for substrate; that stretch reads IDVGGGLGIDY. Low complexity predominate over residues 668 to 686; sequence ASGESSGMSSDSEGSAAGA. A disordered region spans residues 668–702; sequence ASGESSGMSSDSEGSAAGAAEEDDDEWEFMRGLTV.

This sequence belongs to the Orn/Lys/Arg decarboxylase class-II family. SpeA subfamily. It depends on pyridoxal 5'-phosphate as a cofactor. The cofactor is Mg(2+). Expressed in roots, leaves and stems (at protein level).

The catalysed reaction is L-arginine + H(+) = agmatine + CO2. It functions in the pathway amine and polyamine biosynthesis; agmatine biosynthesis; agmatine from L-arginine: step 1/1. This chain is Arginine decarboxylase 1 (ADC1), found in Oryza sativa subsp. japonica (Rice).